A 344-amino-acid polypeptide reads, in one-letter code: Methionine import ATP-binding protein MetN (344 aa).

The 240-residue stretch at 2-241 (LELKQVGKVY…PQAEVTKAFV (240 aa)) folds into the ABC transporter domain. 38 to 45 (GYSGAGKS) contributes to the ATP binding site.

It belongs to the ABC transporter superfamily. Methionine importer (TC 3.A.1.24) family. As to quaternary structure, the complex is composed of two ATP-binding proteins (MetN), two transmembrane proteins (MetI) and a solute-binding protein (MetQ).

It is found in the cell membrane. It carries out the reaction L-methionine(out) + ATP + H2O = L-methionine(in) + ADP + phosphate + H(+). The catalysed reaction is D-methionine(out) + ATP + H2O = D-methionine(in) + ADP + phosphate + H(+). In terms of biological role, part of the ABC transporter complex MetNIQ involved in methionine import. Responsible for energy coupling to the transport system. The chain is Methionine import ATP-binding protein MetN from Latilactobacillus sakei subsp. sakei (strain 23K) (Lactobacillus sakei subsp. sakei).